The primary structure comprises 285 residues: Ribosomal RNA small subunit methyltransferase I (285 aa).

Belongs to the methyltransferase superfamily. RsmI family.

It localises to the cytoplasm. The catalysed reaction is cytidine(1402) in 16S rRNA + S-adenosyl-L-methionine = 2'-O-methylcytidine(1402) in 16S rRNA + S-adenosyl-L-homocysteine + H(+). Its function is as follows. Catalyzes the 2'-O-methylation of the ribose of cytidine 1402 (C1402) in 16S rRNA. The chain is Ribosomal RNA small subunit methyltransferase I from Mycobacterium tuberculosis (strain ATCC 25618 / H37Rv).